Reading from the N-terminus, the 566-residue chain is Bifunctional NADP phosphatase/NAD kinase (566 aa).

Residues 1–283 are NADP phosphatase; that stretch reads MDMLEMALNI…KLVGIFGNRW (283 aa). Mg(2+)-binding residues include Glu66, Asp85, Val87, Asp88, and Asp229. The interval 275-566 is NAD kinase; it reads LVGIFGNRWR…YNKLKKLSLM (292 aa). Catalysis depends on Asp355, which acts as the Proton acceptor. Residues 355 to 356, Arg360, 430 to 431, Lys441, Arg458, Asp460, 471 to 476, and Asn528 contribute to the NAD(+) site; these read DG, NE, and TAYSLS.

In the N-terminal section; belongs to the inositol monophosphatase superfamily. The protein in the C-terminal section; belongs to the NAD kinase family. As to quaternary structure, homotetramer. It depends on Mg(2+) as a cofactor.

It is found in the cytoplasm. The enzyme catalyses NAD(+) + ATP = ADP + NADP(+) + H(+). It catalyses the reaction NADP(+) + H2O = phosphate + NAD(+). In terms of biological role, involved in the regulation of the intracellular balance between NAD(H) and NADP(H), and is a key enzyme in the biosynthesis of NADP. Catalyzes the phosphorylation and dephosphorylation of NAD and NADP, respectively. Although it shows conflicting dual activities and is able to supply NADP, it seems that its physiological role is to prevent excess accumulation of NADP. The chain is Bifunctional NADP phosphatase/NAD kinase from Methanococcus maripaludis (strain DSM 14266 / JCM 13030 / NBRC 101832 / S2 / LL).